A 178-amino-acid polypeptide reads, in one-letter code: Cytochrome b6-f complex iron-sulfur subunit (178 aa).

A helical transmembrane segment spans residues 20-42; that stretch reads LLTFGSVTGVALGSLYPVVKYFI. Residues 68 to 161 enclose the Rieske domain; it reads WLANHSDGDR…IAVENDNVFV (94 aa). Residues cysteine 107, histidine 109, cysteine 125, and histidine 128 each coordinate [2Fe-2S] cluster. An intrachain disulfide couples cysteine 112 to cysteine 127.

The protein belongs to the Rieske iron-sulfur protein family. As to quaternary structure, the 4 large subunits of the cytochrome b6-f complex are cytochrome b6, subunit IV (17 kDa polypeptide, PetD), cytochrome f and the Rieske protein, while the 4 small subunits are PetG, PetL, PetM and PetN. The complex functions as a dimer. The cofactor is [2Fe-2S] cluster.

It is found in the cellular thylakoid membrane. The catalysed reaction is 2 oxidized [plastocyanin] + a plastoquinol + 2 H(+)(in) = 2 reduced [plastocyanin] + a plastoquinone + 4 H(+)(out). In terms of biological role, component of the cytochrome b6-f complex, which mediates electron transfer between photosystem II (PSII) and photosystem I (PSI), cyclic electron flow around PSI, and state transitions. The polypeptide is Cytochrome b6-f complex iron-sulfur subunit (Prochlorococcus marinus (strain MIT 9303)).